Consider the following 146-residue polypeptide: 3-dehydroquinate dehydratase (146 aa).

The active-site Proton acceptor is Y24. The substrate site is built by N73, H79, and D86. H99 acts as the Proton donor in catalysis. Substrate is bound by residues 100 to 101 (LS) and R110.

It belongs to the type-II 3-dehydroquinase family. Homododecamer.

The enzyme catalyses 3-dehydroquinate = 3-dehydroshikimate + H2O. The protein operates within metabolic intermediate biosynthesis; chorismate biosynthesis; chorismate from D-erythrose 4-phosphate and phosphoenolpyruvate: step 3/7. Functionally, catalyzes a trans-dehydration via an enolate intermediate. The chain is 3-dehydroquinate dehydratase from Shewanella baltica (strain OS185).